The sequence spans 162 residues: Interleukin-15 (162 aa).

The N-terminal stretch at 1–29 (MRISKPHLRSISIQCYLCLLLKSHFLTEA) is a signal peptide. A propeptide spanning residues 30-48 (GIHVFILGCFSAGLPKTEA) is cleaved from the precursor. Cystine bridges form between C83–C133 and C90–C136. N127 carries N-linked (GlcNAc...) asparagine glycosylation.

Belongs to the IL-15/IL-21 family.

The protein resides in the secreted. In terms of biological role, cytokine that plays a major role in the development of inflammatory and protective immune responses to microbial invaders and parasites by modulating immune cells of both the innate and adaptive immune systems. Stimulates the proliferation of natural killer cells, T-cells and B-cells and promotes the secretion of several cytokines. In monocytes, induces the production of IL8 and monocyte chemotactic protein 1/CCL2, two chemokines that attract neutrophils and monocytes respectively to sites of infection. Unlike most cytokines, which are secreted in soluble form, IL15 is expressed in association with its high affinity IL15RA on the surface of IL15-producing cells and delivers signals to target cells that express IL2RB and IL2RG receptor subunits. Binding to its receptor triggers the phosphorylation of JAK1 and JAK3 and the recruitment and subsequent phosphorylation of signal transducer and activator of transcription-3/STAT3 and STAT5. In mast cells, induces the rapid tyrosine phosphorylation of STAT6 and thereby controls mast cell survival and release of cytokines such as IL4. This Chlorocebus aethiops (Green monkey) protein is Interleukin-15 (IL15).